The chain runs to 213 residues: Glycerol-3-phosphate acyltransferase (213 aa).

The next 6 membrane-spanning stretches (helical) occupy residues 2 to 22 (ITIV…GLWI), 52 to 74 (AGMA…PIIF), 81 to 100 (PLIF…FAGF), 112 to 132 (VIFG…FGAL), 143 to 163 (VTAS…GFIL), and 164 to 184 (SNYD…IIIR).

The protein belongs to the PlsY family. As to quaternary structure, probably interacts with PlsX.

It localises to the cell membrane. It carries out the reaction an acyl phosphate + sn-glycerol 3-phosphate = a 1-acyl-sn-glycero-3-phosphate + phosphate. It functions in the pathway lipid metabolism; phospholipid metabolism. Functionally, catalyzes the transfer of an acyl group from acyl-phosphate (acyl-PO(4)) to glycerol-3-phosphate (G3P) to form lysophosphatidic acid (LPA). This enzyme utilizes acyl-phosphate as fatty acyl donor, but not acyl-CoA or acyl-ACP. The protein is Glycerol-3-phosphate acyltransferase of Streptococcus pneumoniae (strain CGSP14).